Consider the following 117-residue polypeptide: Aspartate 1-decarboxylase (117 aa).

Serine 25 functions as the Schiff-base intermediate with substrate; via pyruvic acid in the catalytic mechanism. Position 25 is a pyruvic acid (Ser) (serine 25). Threonine 57 is a binding site for substrate. The active-site Proton donor is tyrosine 58. 72–74 (GAA) serves as a coordination point for substrate.

Belongs to the PanD family. In terms of assembly, heterooctamer of four alpha and four beta subunits. Pyruvate is required as a cofactor. Is synthesized initially as an inactive proenzyme, which is activated by self-cleavage at a specific serine bond to produce a beta-subunit with a hydroxyl group at its C-terminus and an alpha-subunit with a pyruvoyl group at its N-terminus.

Its subcellular location is the cytoplasm. The enzyme catalyses L-aspartate + H(+) = beta-alanine + CO2. It participates in cofactor biosynthesis; (R)-pantothenate biosynthesis; beta-alanine from L-aspartate: step 1/1. Its function is as follows. Catalyzes the pyruvoyl-dependent decarboxylation of aspartate to produce beta-alanine. The sequence is that of Aspartate 1-decarboxylase from Helicobacter pylori (strain J99 / ATCC 700824) (Campylobacter pylori J99).